The following is a 234-amino-acid chain: MNSTSDDNPRPALRALTPLEARVLGVLFEKQHTVPDTYPLSLNSLAAGCNQKTSRSPVMNVSESEILDAINTLKRLSLVLEGSSSRVPRYEHNIERVLGLPRQSAALLTALLLRGPQTAAELRLATSRLHSFADTSSVEAFLEELAGNDPPRVVKLPRTPGERESRWMHLLCGEPSAEQLRGAALSDEPLPPGELEGLRAQQRELSERVERLEALVVHLAGELGVSLDDLKGRL.

It belongs to the UPF0502 family.

This is UPF0502 protein Bphy_5360 from Paraburkholderia phymatum (strain DSM 17167 / CIP 108236 / LMG 21445 / STM815) (Burkholderia phymatum).